The primary structure comprises 111 residues: Iron-sulfur cluster assembly protein CyaY (111 aa).

This sequence belongs to the frataxin family.

In terms of biological role, involved in iron-sulfur (Fe-S) cluster assembly. May act as a regulator of Fe-S biogenesis. This is Iron-sulfur cluster assembly protein CyaY from Cupriavidus taiwanensis (strain DSM 17343 / BCRC 17206 / CCUG 44338 / CIP 107171 / LMG 19424 / R1) (Ralstonia taiwanensis (strain LMG 19424)).